Here is a 300-residue protein sequence, read N- to C-terminus: Bifunctional protein FolD 2 (300 aa).

NADP(+)-binding positions include 165-167, S190, and I231; that span reads GRS.

Belongs to the tetrahydrofolate dehydrogenase/cyclohydrolase family. In terms of assembly, homodimer.

The catalysed reaction is (6R)-5,10-methylene-5,6,7,8-tetrahydrofolate + NADP(+) = (6R)-5,10-methenyltetrahydrofolate + NADPH. The enzyme catalyses (6R)-5,10-methenyltetrahydrofolate + H2O = (6R)-10-formyltetrahydrofolate + H(+). It participates in one-carbon metabolism; tetrahydrofolate interconversion. Its function is as follows. Catalyzes the oxidation of 5,10-methylenetetrahydrofolate to 5,10-methenyltetrahydrofolate and then the hydrolysis of 5,10-methenyltetrahydrofolate to 10-formyltetrahydrofolate. The chain is Bifunctional protein FolD 2 from Pseudomonas syringae pv. tomato (strain ATCC BAA-871 / DC3000).